We begin with the raw amino-acid sequence, 196 residues long: UPF0340 protein TT_C0214 (196 aa).

Belongs to the UPF0340 family.

The sequence is that of UPF0340 protein TT_C0214 from Thermus thermophilus (strain ATCC BAA-163 / DSM 7039 / HB27).